Here is a 359-residue protein sequence, read N- to C-terminus: Small ribosomal subunit protein uS2 (359 aa).

The segment at 232–295 (EPQFKPSEFT…PVGTEPVATT (64 aa)) is disordered. 2 stretches are compositionally biased toward basic and acidic residues: residues 239–250 (EFTRRDGDENRN) and 257–273 (DNRRMSGRNERGRDTHY).

Belongs to the universal ribosomal protein uS2 family.

The sequence is that of Small ribosomal subunit protein uS2 (rpsB) from Spiroplasma citri.